A 315-amino-acid chain; its full sequence is Zinc finger protein 691 (315 aa).

A compositionally biased stretch (polar residues) spans 1-10 (MSLCSPTHSA). Positions 1 to 90 (MSLCSPTHSA…QETHPKKPWQ (90 aa)) are disordered. A compositionally biased stretch (basic and acidic residues) spans 33 to 58 (GSEKEQSPEPHLPEEGEGGKPWRVDD). A phosphoserine mark is found at Ser-39, Ser-75, and Ser-77. Residue Lys-113 forms a Glycyl lysine isopeptide (Lys-Gly) (interchain with G-Cter in SUMO2) linkage. 7 C2H2-type zinc fingers span residues 115 to 137 (FICA…QRIH), 143 to 165 (YKCS…ERIH), 171 to 193 (YKCP…QQDH), 199 to 221 (YRCD…HRTH), 227 to 249 (YICC…HRTH), 255 to 277 (YECT…QRTH), and 283 to 305 (YRCT…QKTH).

It belongs to the krueppel C2H2-type zinc-finger protein family.

The protein localises to the nucleus. Functionally, may be involved in transcriptional regulation. This Homo sapiens (Human) protein is Zinc finger protein 691 (ZNF691).